A 146-amino-acid chain; its full sequence is Lysozyme-like protein 4 (146 aa).

The first 19 residues, 1-19 (MKASVVLSLLGYLVVPSGA), serve as a signal peptide directing secretion. Residues 20 to 146 (YILGRCTVAK…LARWLDGCKL (127 aa)) form the C-type lysozyme domain. Disulfide bonds link cysteine 25-cysteine 144, cysteine 49-cysteine 131, cysteine 84-cysteine 96, and cysteine 92-cysteine 110. Glutamate 54 is an active-site residue.

The protein belongs to the glycosyl hydrolase 22 family. Monomer. In terms of tissue distribution, expressed in testis and epididymis.

Its subcellular location is the secreted. The protein localises to the cytoplasmic vesicle. It is found in the secretory vesicle. It localises to the acrosome. The protein resides in the cell projection. Its subcellular location is the cilium. The protein localises to the flagellum. May be involved in fertilization. Has no detectable bacteriolytic and lysozyme activities in vitro. The sequence is that of Lysozyme-like protein 4 (LYZL4) from Homo sapiens (Human).